The following is a 374-amino-acid chain: Serpin B8 (374 aa).

Belongs to the serpin family. Ov-serpin subfamily.

It is found in the cytoplasm. In terms of biological role, has an important role in epithelial desmosome-mediated cell-cell adhesion. The sequence is that of Serpin B8 (SERPINB8) from Bos taurus (Bovine).